The sequence spans 610 residues: MSDQFDAKAFLKTVTSQPGVYRMYDAGGTVIYVGKAKDLKKRLSSYFRSNLASRKTEALVAQIQQIDVTVTHTETEALLLEHNYIKLYQPRYNVLLRDDKSYPFIFLSGDTHPRLAMHRGAKHAKGEYFGPFPNGYAVRETLALLQKIFPIRQCENSVYRNRSRPCLQYQIGRCLGPCVEGLVSEEEYAQQVEYVRLFLSGKDDQVLTQLISRMETASQNLEFEEAARIRDQIQAVRRVTEKQFVSNTGDDLDVIGVAFDAGMACVHVLFIRQGKVLGSRSYFPKVPGGTELSEVVETFVGQFYLQGSQMRTLPGEILLDFNLSDKTLLADSLSELAGRKINVQTKPRGDRARYLKLARTNAATALTSKLSQQSTVHQRLTALASVLKLPEVKRMECFDISHTMGEQTVASCVVFDANGPLRAEYRRYNITGITPGDDYAAMNQVLRRRYGKAIDDSKIPDVILIDGGKGQLAQAKNVFAELDVSWDKNHPLLLGVAKGADRKAGLETLFFEPEGEGFSLPPDSPALHVIQHIRDESHDHAIGGHRKKRAKVKNTSSLETIEGIGPKRRQMLLKYMGGLQGLRNASVEEIAKVPGISQGLAEKIFWSLKH.

The GIY-YIG domain maps to 16-94 (SQPGVYRMYD…IKLYQPRYNV (79 aa)). Positions 204 to 239 (DQVLTQLISRMETASQNLEFEEAARIRDQIQAVRRV) constitute a UVR domain.

Belongs to the UvrC family. Interacts with UvrB in an incision complex.

It localises to the cytoplasm. In terms of biological role, the UvrABC repair system catalyzes the recognition and processing of DNA lesions. UvrC both incises the 5' and 3' sides of the lesion. The N-terminal half is responsible for the 3' incision and the C-terminal half is responsible for the 5' incision. This is UvrABC system protein C from Escherichia coli (strain UTI89 / UPEC).